The chain runs to 98 residues: Defensin-A1 (98 aa).

The N-terminal stretch at 1-19 is a signal peptide; sequence MQTLSFLLALLFLVAQTPA. The propeptide occupies 20-62; sequence QPTGEGEKGGTIQEPEATEAQDTAAVLMAAGAADGDDSDTKQL. Intrachain disulfides connect C67/C94, C69/C83, and C73/C93. Residues 97-98 constitute a propeptide that is removed on maturation; that stretch reads IK.

It belongs to the alpha-defensin family. In terms of tissue distribution, highly expressed in intestine, and expressed at lower levels in lung and spleen.

The protein resides in the secreted. Its function is as follows. Has antimicrobial activity. This is Defensin-A1 from Ornithorhynchus anatinus (Duckbill platypus).